A 1174-amino-acid polypeptide reads, in one-letter code: Probable DNA-directed RNA polymerase I subunit RPA2 (1174 aa).

The segment covering 1–16 (MSFQTLERERTFKNPP) has biased composition (basic and acidic residues). Residues 1–23 (MSFQTLERERTFKNPPKDGTSFP) form a disordered region. Residues 1089 to 1118 (CRDCGSIISIMSTISMNGVGSASEVRCRSC) form a C4-type zinc finger.

The protein belongs to the RNA polymerase beta chain family. As to quaternary structure, component of the RNA polymerase I (Pol I) complex consisting of 14 subunits.

It is found in the nucleus. It localises to the nucleolus. The enzyme catalyses RNA(n) + a ribonucleoside 5'-triphosphate = RNA(n+1) + diphosphate. DNA-dependent RNA polymerase catalyzes the transcription of DNA into RNA using the four ribonucleoside triphosphates as substrates. Second largest core component of RNA polymerase I which synthesizes ribosomal RNA precursors. Proposed to contribute to the polymerase catalytic activity and forms the polymerase active center together with the largest subunit. Pol I is composed of mobile elements and RPA2 is part of the core element with the central large cleft and probably a clamp element that moves to open and close the cleft. This is Probable DNA-directed RNA polymerase I subunit RPA2 (rpa2) from Schizosaccharomyces pombe (strain 972 / ATCC 24843) (Fission yeast).